The chain runs to 815 residues: uncharacterized protein (815 aa).

The N-terminal stretch at 1–25 is a signal peptide; the sequence is MVVMKKKRILIVSAIVLLFLTVASA. A run of 6 helical transmembrane segments spans residues 127-147, 157-177, 311-331, 333-353, 372-392, and 401-421; these read FGEALFIFTCAYVVYLFCVRG, ILFICVMVIGGLWMSNAGYYM, SFIAVVASIVIGIPFLALAFF, FLLQVVALVIVFFVPFAFILA, VYLLKAMLGVIVLFVYVTCFI, and GFGMYLLNVAVLASILWIGFH. The segment at 483-815 is disordered; it reads KDGSNADGVT…DRLRRDERTR (333 aa). Residues 513-543 show a composition bias toward polar residues; it reads HAISRTPQKETANGIANHNSRSLKRNPQTLS. Composition is skewed to basic and acidic residues over residues 544–563 and 599–614; these read KEQEKQKQKEAFANAKENKQ and QDKKDESARTDQKEYV. Positions 619–630 are enriched in polar residues; sequence KQPNNQQQTDDA. Over residues 648–658 the composition is skewed to basic and acidic residues; the sequence is ENEKDTERTDQ. The span at 665-678 shows a compositional bias: polar residues; that stretch reads EQNQNLETDQQQDF. The span at 696-705 shows a compositional bias: basic and acidic residues; it reads KTAEIKRSDQ. Positions 720-732 are enriched in polar residues; it reads SPQSTKVENQPIA. Basic and acidic residues predominate over residues 734-757; sequence NERKIRPSEPAKVHSDGIRVDEKQ. Residues 773 to 793 show a composition bias toward polar residues; sequence PSSQTIKRTEQSVNSFDQVSL. The span at 796-815 shows a compositional bias: basic and acidic residues; that stretch reads IARRSSSKVEDRLRRDERTR.

It is found in the cell membrane. This is an uncharacterized protein from Bacillus subtilis (strain 168).